Reading from the N-terminus, the 591-residue chain is Dihydroxyacetone kinase 2 (591 aa).

Residues 8-344 (SDGNIVTPYL…FDYPTTASGW (337 aa)) form the DhaK domain. Positions 40 to 59 (ASAPNSGNPPKVSLVSGGGS) are disordered. Substrate contacts are provided by residues 58–61 (GSGH), lysine 109, and aspartate 114. Catalysis depends on histidine 223, which acts as the Tele-hemiaminal-histidine intermediate. The region spanning 384 to 587 (DTFAKILLAG…LAALLDGFVT (204 aa)) is the DhaL domain. ATP contacts are provided by residues 413 to 416 (DGDC), 459 to 460 (TS), 511 to 512 (TL), and 572 to 574 (DPG).

This sequence belongs to the dihydroxyacetone kinase (DAK) family.

The catalysed reaction is dihydroxyacetone + ATP = dihydroxyacetone phosphate + ADP + H(+). It catalyses the reaction D-glyceraldehyde + ATP = D-glyceraldehyde 3-phosphate + ADP + H(+). Its pathway is polyol metabolism; glycerol fermentation; glycerone phosphate from glycerol (oxidative route): step 2/2. Catalyzes both the phosphorylation of dihydroxyacetone and of glyceraldehyde. This chain is Dihydroxyacetone kinase 2 (DAK2), found in Saccharomyces cerevisiae (strain ATCC 204508 / S288c) (Baker's yeast).